Consider the following 152-residue polypeptide: Large ribosomal subunit protein bL9 (152 aa).

Belongs to the bacterial ribosomal protein bL9 family.

In terms of biological role, binds to the 23S rRNA. In Mycobacterium ulcerans (strain Agy99), this protein is Large ribosomal subunit protein bL9.